A 236-amino-acid polypeptide reads, in one-letter code: MSRPCGLPEPVRNNLIDDAKARLRKSDVGTRYSHLSSNKFSVLVPLLARGGKLYLMFTVRSDKLKREPGEVCFPGGKRDPVDTDDTATALREAQEEVGLHPHQVEVVSHLVPYVFDNDALVTPVVGFLDHNFQAQPNADEVKEVFFVPLDYFLHPQVYYQKQITQSGRDFIMHCFEYKDPETGVNYLIQGMTSKLAVLVALIILEQSPAFKIDFDLHDLIPSCERTFLWRYSLSKL.

An N6-succinyllysine modification is found at Lys20. The region spanning 37-169 (SNKFSVLVPL…QKQITQSGRD (133 aa)) is the Nudix hydrolase domain. A Nudix box motif is present at residues 77–98 (KRDPVDTDDTATALREAQEEVG). Residues Glu92 and Glu96 each contribute to the Mg(2+) site. The residue at position 178 (Lys178) is an N6-succinyllysine. Positions 234-236 (SKL) match the Microbody targeting signal motif.

It belongs to the Nudix hydrolase family. PCD1 subfamily. As to quaternary structure, monomer. Mn(2+) is required as a cofactor. Requires Mg(2+) as cofactor. As to expression, highly expressed in liver, brown adipose tissue and heart. Expressed at intermediate level in lung and kidney and at low level in brain. In terms of tissue distribution, expressed in liver, brown adipose tissue and heart at 20 times lower levels than isoform 1.

It localises to the peroxisome. It catalyses the reaction hexanoyl-CoA + H2O = hexanoyl-4'-phosphopantetheine + adenosine 3',5'-bisphosphate + 2 H(+). It carries out the reaction octanoyl-CoA + H2O = S-octanoyl-4'-phosphopantetheine + adenosine 3',5'-bisphosphate + 2 H(+). The enzyme catalyses butanoyl-CoA + H2O = S-butanoyl-4'-phosphopantetheine + adenosine 3',5'-bisphosphate + 2 H(+). The catalysed reaction is decanoyl-CoA + H2O = decanoyl-4'-phosphopantetheine + adenosine 3',5'-bisphosphate + 2 H(+). It catalyses the reaction dodecanoyl-CoA + H2O = S-dodecanoyl-4'-phosphopantetheine + adenosine 3',5'-bisphosphate + 2 H(+). It carries out the reaction tetradecanoyl-CoA + H2O = tetradecanoyl-4'-phosphopantetheine + adenosine 3',5'-bisphosphate + 2 H(+). The enzyme catalyses choloyl-CoA + H2O = S-choloyl-4'-phosphopantetheine + adenosine 3',5'-bisphosphate + 2 H(+). The catalysed reaction is 3alpha,7alpha,12alpha-trihydroxy-5beta-cholestan-26-oyl-CoA + H2O = 3alpha,7alpha,12alpha-trihydroxy-5beta-cholestan-26-oyl-4'-phosphopantetheine + adenosine 3',5'-bisphosphate + 2 H(+). It catalyses the reaction acetyl-CoA + H2O = S-acetyl-4'-phosphopantetheine + adenosine 3',5'-bisphosphate + 2 H(+). It carries out the reaction CoA + H2O = (R)-4'-phosphopantetheine + adenosine 3',5'-bisphosphate + 2 H(+). The enzyme catalyses propanoyl-CoA + H2O = propanoyl-4'-phosphopantetheine + adenosine 3',5'-bisphosphate + 2 H(+). The catalysed reaction is malonyl-CoA + H2O = malonyl-4'-phosphopantetheine + adenosine 3',5'-bisphosphate + 2 H(+). It catalyses the reaction succinyl-CoA + H2O = succinyl-4'-phosphopantetheine + adenosine 3',5'-bisphosphate + 2 H(+). It carries out the reaction a 5'-end CoA-ribonucleoside in mRNA + H2O = a 5'-end phospho-adenosine-phospho-ribonucleoside in mRNA + (R)-4'-phosphopantetheine + 2 H(+). Inhibited by fluoride. Functionally, fatty acyl-coenzyme A (CoA) diphosphatase that hydrolyzes fatty acyl-CoA to yield acyl-4'-phosphopantetheine and adenosine 3',5'-bisphosphate. Cleaves CoA, CoA esters and oxidized CoA with similar efficiencies. Preferentially hydrolyzes medium-chain acyl-CoAs and bile acid-CoAs. Has no activity toward NDP-sugars, CDP-alcohols, (deoxy)nucleoside 5'-triphosphates, nucleoside 5'-di or monophosphates, diadenosine polyphosphates, NAD, NADH, NADP, NADPH or thymidine-5'-monophospho-p-nitrophenyl ester. May be required to eliminate oxidized CoA from peroxisomes, or regulate CoA and acyl-CoA levels in this organelle in response to metabolic demand. Does not play a role in U8 snoRNA decapping activity. Binds U8 snoRNA. Exhibits decapping activity towards dpCoA-capped RNAs in vitro. The protein is Peroxisomal coenzyme A diphosphatase NUDT7 of Mus musculus (Mouse).